The chain runs to 173 residues: Development-specific protein S (173 aa).

Beta/gamma crystallin 'Greek key' domains follow at residues 2–46 and 48–86; these read ANIT…KVPP and VKAI…RVIS. Positions 8, 37, 38, 40, 54, 77, 78, and 80 each coordinate Ca(2+). The interval 87–90 is connecting peptide; the sequence is VPVQ. Beta/gamma crystallin 'Greek key' domains are found at residues 91 to 135 and 136 to 173; these read PRAR…KPQG and LAVV…IRIS.

The protein belongs to the beta/gamma-crystallin family.

Functionally, protein S, induced in large amounts during fruiting body formation, assembles on the surface of myxospores in the presence of calcium ions. In Myxococcus xanthus, this protein is Development-specific protein S (tps).